The sequence spans 255 residues: BTB/POZ domain-containing protein kctd15 (255 aa).

The BTB domain maps to 30–100; it reads APVHIDVGGH…LRTSKLLLPE (71 aa).

In terms of assembly, forms oligomers, predominantly homopentamers. Interacts with TFAP2A; this interaction inhibits TFAP2A transcriptional activation.

It localises to the nucleus. In terms of biological role, during embryonic development, interferes with neural crest formation. Inhibits AP2 transcriptional activity by interaction with its activation domain. In Xenopus tropicalis (Western clawed frog), this protein is BTB/POZ domain-containing protein kctd15 (kctd15).